A 303-amino-acid chain; its full sequence is Type II methyltransferase M.MjaI (303 aa).

The protein belongs to the N(4)/N(6)-methyltransferase family. N(4) subfamily.

The catalysed reaction is a 2'-deoxycytidine in DNA + S-adenosyl-L-methionine = an N(4)-methyl-2'-deoxycytidine in DNA + S-adenosyl-L-homocysteine + H(+). In terms of biological role, a beta subtype methylase that recognizes the double-stranded sequence 5'-CTAG-3', methylates C-1 on both strands, and protects the DNA from cleavage by the MjaI endonuclease. The sequence is that of Type II methyltransferase M.MjaI (mjaIM) from Methanocaldococcus jannaschii (strain ATCC 43067 / DSM 2661 / JAL-1 / JCM 10045 / NBRC 100440) (Methanococcus jannaschii).